The sequence spans 317 residues: Tyrosine--tRNA ligase (317 aa).

Tyrosine 32 contributes to the L-tyrosine binding site. Residues 37-45 carry the 'HIGH' region motif; sequence PSGEIHLGH. L-tyrosine contacts are provided by tyrosine 152, glutamine 156, aspartate 159, and glutamine 174. The 'KMSKS' region motif lies at 208-212; that stretch reads KMSSS. Serine 211 lines the ATP pocket.

The protein belongs to the class-I aminoacyl-tRNA synthetase family. TyrS type 3 subfamily. In terms of assembly, homodimer.

Its subcellular location is the cytoplasm. It catalyses the reaction tRNA(Tyr) + L-tyrosine + ATP = L-tyrosyl-tRNA(Tyr) + AMP + diphosphate + H(+). Catalyzes the attachment of tyrosine to tRNA(Tyr) in a two-step reaction: tyrosine is first activated by ATP to form Tyr-AMP and then transferred to the acceptor end of tRNA(Tyr). The chain is Tyrosine--tRNA ligase from Methanocorpusculum labreanum (strain ATCC 43576 / DSM 4855 / Z).